A 506-amino-acid polypeptide reads, in one-letter code: MSGIDFKQKISFQRPFSKPSSAEDEYEITRVFESDRGRIVNSAAIRRLQQKTQVFPLERNAAVRSRLTHSLEVQQVGRYIAKEILNRFKQDKKITAYGLDKLLDPFESIVEMACLMHDIGNPPFGHFGESAINDWFTKRMDPNGGSGSEPQSRDQCQVEVLKLREGETELNILRSKIRHDLSQFEGNAQAIRLVHSLLKLNLTYAQVGCILKYTKPAYWSAPIPASHNYLMKKPGFYLAEENYVKELRRELNMEEFDRFPLTYIMEAADDISYCIADLEDAVEKNIFSVEQLYDHMSQEWGAVTPGDLFDKVVGAAFRQLGREQGRRSSEDQFFMYLRVNTVGKLVPHAAQRFIENLPAVFSGSFNQALLEDSSAACKLLQIFKRVAVKHVFNHPEVEQLELQGYRVISGLLDIYSPLLAMPETAFTQLVADDRHRKYPIETRLFHKLSIKHRLAYAESAERIRNLPSEQYEIYEYYYRARLIQDYISGMTDLYAYDEYRRLMAAE.

The 209-residue stretch at 66-274 folds into the HD domain; sequence RLTHSLEVQQ…MEAADDISYC (209 aa).

It belongs to the dGTPase family. Type 1 subfamily. In terms of assembly, homotetramer. Requires Mg(2+) as cofactor.

It carries out the reaction dGTP + H2O = 2'-deoxyguanosine + triphosphate + H(+). In terms of biological role, dGTPase preferentially hydrolyzes dGTP over the other canonical NTPs. The chain is Deoxyguanosinetriphosphate triphosphohydrolase from Yersinia pseudotuberculosis serotype O:3 (strain YPIII).